Reading from the N-terminus, the 2507-residue chain is Highly reducing polyketide synthase lcsB (2507 aa).

Residues 2–393 (AEPIAVVGMA…GVNAHVIVES (392 aa)) enclose the Ketosynthase family 3 (KS3) domain. Residues 399–501 (NHDRGLSNGS…RNGYSGDDVE (103 aa)) are disordered. Polar residues-rich tracts occupy residues 405–414 (SNGSTTSSSP) and 470–488 (NDTPQSRSTPSNGDQTSHT). The segment at 581 to 900 (WVFTGQGAQW…DESLLQLAGK (320 aa)) is malonyl-CoA:ACP transacylase (MAT) domain. An N-terminal hotdog fold region spans residues 953–1080 (HELLGSRVTE…GEARASVDKA (128 aa)). The tract at residues 953–1232 (HELLGSRVTE…FKASALTRSD (280 aa)) is dehydratase (DH) domain. The PKS/mFAS DH domain occupies 953-1234 (HELLGSRVTE…ASALTRSDDE (282 aa)). Catalysis depends on His-984, which acts as the Proton acceptor; for dehydratase activity. The interval 1092–1234 (ARTVDANEWY…ASALTRSDDE (143 aa)) is C-terminal hotdog fold. The Proton donor; for dehydratase activity role is filled by Asp-1151. The interval 1402–1570 (LGHTNPRLRI…EMVAAGFAEP (169 aa)) is methyltransferase (CMet) domain. Positions 1793–2105 (GLLHTMGWSQ…GGRHIGKIIV (313 aa)) are enoyl reductase (ER) (ER) domain. The tract at residues 2130-2303 (SYLLVGGLGG…ASVIDIGVMG (174 aa)) is ketoreductase (KR) domain. Residues 2425-2503 (EESTVIIATA…SLGDYIRTAL (79 aa)) enclose the Carrier domain. Ser-2463 carries the post-translational modification O-(pantetheine 4'-phosphoryl)serine.

It participates in secondary metabolite biosynthesis. Its function is as follows. Highly reducing polyketide synthase; part of the gene cluster that mediates the biosynthesis of the lipopeptide antibiotics leucinostatins that show extensive biological activities, including antimalarial, antiviral, antibacterial, antifungal, and antitumor activities, as well as phytotoxic. Leucinostatin A contains nine amino acid residues, including the unusual amino acid 4-methyl-L-proline (MePro), 2-amino-6-hydroxy-4-methyl-8-oxodecanoic acid (AHyMeOA), 3-hydroxyleucine (HyLeu), alpha-aminoisobutyric acid (AIB), beta-Ala, a 4-methylhex-2-enoic acid at the N-terminus as well as a N1,N1-dimethylpropane-1,2-diamine (DPD) at the C-terminus. The biosynthesis of leucinostatins is probably initiated with the assembly of 4-methylhex-2-enoic acid by a reducing PKS. Two reducing polyketide synthases, lcsB and lcsC, have been identified in the cluster and it is not clear which is the one that assembles 4-methylhex-2-enoic acid since both contain KS, AT, DH, cMT, ER, KR and ACP domains. The polyketide residue might be transferred to the NRPS lcsA, mediated by two additional enzymes, the acyl-CoA ligase lcsD and the thioesterase lcsE. The linear polyketide carboxylic acid, which is released from PKS, is converted to a CoA thioester by lcsD, and then lcsE hydrolyzes the thiol bond and shuttles the polyketide intermediate to lcsA. The C domain of the first module catalyzed the condensation of 4-methylhex-2-enoic acid and MePro carried by domain A1, followed by successive condensations of nine amino acids to trigger the elongation of the linear peptide. A5 and A6 domains of lcsA are proposed to incorporate leucine, A2 AHyMeOA, and A3 incorporates HyLeu. A4, A7 and A8 incorporate AIB. The AHyMeOA in leucinostatin A activated by the A2 might be produced by the second PKS (lcsB or lcsC) present within the cluster. The MePro is probably produced via leucine cyclization and may originate from a separate pathway, independent of the cluster. Another nonproteinogenic amino acid, beta-Ala, could be produced by an aspartic acid decarboxylase also localized outside of the cluster. Two candidates are VFPBJ_01400 and VFPBJ_10476. The final peptide scaffold may be released by the NAD(P)H-dependent thioester reductase (TE) at the C-terminal region of lcsA. Transamination of the lcsA product by the transaminase lcsP may produce DPD at the C-terminus. Further hydroxylation steps performed alternatively by the cytochrome P450 monooxygenases lcsI, lcsK andr lcsN then yield the non-methylated leucinostatins precursor. It is also possible that leucines can be hydroxylated prior to their incorporation into the peptide. Varying extents of methylation then lead to the formation of leucinostatins A and B. The chain is Highly reducing polyketide synthase lcsB from Purpureocillium lilacinum (Paecilomyces lilacinus).